Here is a 152-residue protein sequence, read N- to C-terminus: Deoxyuridine 5'-triphosphate nucleotidohydrolase (152 aa).

Substrate-binding positions include arginine 71–glycine 73, asparagine 84, and leucine 88–aspartate 90.

It belongs to the dUTPase family. Mg(2+) is required as a cofactor.

The enzyme catalyses dUTP + H2O = dUMP + diphosphate + H(+). Its pathway is pyrimidine metabolism; dUMP biosynthesis; dUMP from dCTP (dUTP route): step 2/2. Its function is as follows. This enzyme is involved in nucleotide metabolism: it produces dUMP, the immediate precursor of thymidine nucleotides and it decreases the intracellular concentration of dUTP so that uracil cannot be incorporated into DNA. The protein is Deoxyuridine 5'-triphosphate nucleotidohydrolase of Xanthomonas campestris pv. campestris (strain 8004).